The primary structure comprises 335 residues: Legumin type B (335 aa).

Disordered regions lie at residues 47–87 (PETQ…GNSV) and 102–155 (TEED…GRNG). Residues 105-118 (DTAKRLRSPRDKRN) show a composition bias toward basic and acidic residues. Residues 135 to 144 (QQEEEEQEEE) show a composition bias toward acidic residues. The Cupin type-1 domain maps to 167-314 (ENIAQPARAD…AFGLRQRQVT (148 aa)).

It belongs to the 11S seed storage protein (globulins) family. In terms of assembly, hexamer; each subunit is composed of an acidic and a basic chain derived from a single precursor and linked by a disulfide bond.

Its function is as follows. This protein found in the seeds of many leguminous and non-leguminous plants is the source of sulfur-containing amino acids in seed meals. The sequence is that of Legumin type B (LEB7) from Vicia faba (Broad bean).